The following is a 607-amino-acid chain: Aspartate--tRNA(Asp/Asn) ligase (607 aa).

Glu194 contacts L-aspartate. An aspartate region spans residues 218–221 (QLFK). Arg240 serves as a coordination point for L-aspartate. ATP contacts are provided by residues 240-242 (RDE) and Gln249. His468 serves as a coordination point for L-aspartate. An ATP-binding site is contributed by Glu502. Arg509 is a binding site for L-aspartate. Position 554–557 (554–557 (GLDR)) interacts with ATP.

This sequence belongs to the class-II aminoacyl-tRNA synthetase family. Type 1 subfamily. In terms of assembly, homodimer.

The protein localises to the cytoplasm. The catalysed reaction is tRNA(Asx) + L-aspartate + ATP = L-aspartyl-tRNA(Asx) + AMP + diphosphate. Its function is as follows. Aspartyl-tRNA synthetase with relaxed tRNA specificity since it is able to aspartylate not only its cognate tRNA(Asp) but also tRNA(Asn). Reaction proceeds in two steps: L-aspartate is first activated by ATP to form Asp-AMP and then transferred to the acceptor end of tRNA(Asp/Asn). This Desulfotalea psychrophila (strain LSv54 / DSM 12343) protein is Aspartate--tRNA(Asp/Asn) ligase.